Here is a 102-residue protein sequence, read N- to C-terminus: Cell division topological specificity factor (102 aa).

It belongs to the MinE family.

Prevents the cell division inhibition by proteins MinC and MinD at internal division sites while permitting inhibition at polar sites. This ensures cell division at the proper site by restricting the formation of a division septum at the midpoint of the long axis of the cell. This chain is Cell division topological specificity factor, found in Synechococcus sp. (strain CC9605).